The following is a 109-amino-acid chain: Mannose-specific lectin (109 aa).

The 109-residue stretch at Asp-1–Arg-109 folds into the Bulb-type lectin domain. Cys-29 and Cys-52 are oxidised to a cystine. A propeptide spanning residues Thr-79–Asn-82 is cleaved from the precursor.

In terms of assembly, homotrimer or homotetramer.

Its subcellular location is the secreted. Functionally, mannose-specific lectin. Shows agglutinating activity toward rabbit erythrocytes and mitogenic activity towards mouse lymphocytes. This Aloe arborescens (Kidachi aloe) protein is Mannose-specific lectin.